The following is a 387-amino-acid chain: GDP-mannose transporter (387 aa).

Positions M1 to R25 are enriched in basic and acidic residues. Topologically, residues M1–S42 are cytoplasmic. The interval M1 to N45 is disordered. The span at P32 to N45 shows a compositional bias: low complexity. The chain crosses the membrane as a helical span at residues I43–V63. Residues T64–G71 are Lumenal-facing. A helical membrane pass occupies residues V72–I92. The Cytoplasmic portion of the chain corresponds to Q93–K112. The chain crosses the membrane as a helical span at residues K113–T129. Residues K130–S136 are Lumenal-facing. A helical membrane pass occupies residues I137–Y153. Residues G154–S162 are Cytoplasmic-facing. The chain crosses the membrane as a helical span at residues V163–A184. Topologically, residues D185–T206 are lumenal. Residues L207 to G227 form a helical membrane-spanning segment. At M228–D241 the chain is on the cytoplasmic side. A helical transmembrane segment spans residues T242–E262. The Lumenal segment spans residues D263–S280. The chain crosses the membrane as a helical span at residues L281 to W301. Residues C302–T309 are Cytoplasmic-facing. The chain crosses the membrane as a helical span at residues T310–F329. At F330–D332 the chain is on the lumenal side. Residues P333 to A355 form a helical membrane-spanning segment. The Cytoplasmic portion of the chain corresponds to K356–S387. Positions G366–S387 are disordered. A compositionally biased stretch (polar residues) spans L368–M381.

It belongs to the TPT transporter family. SLC35D subfamily. As to quaternary structure, homooligomer.

It localises to the golgi apparatus membrane. Its subcellular location is the cytoplasmic vesicle membrane. It is found in the endoplasmic reticulum membrane. Involved in the import of GDP-mannose from the cytoplasm into the Golgi lumen. The protein is GDP-mannose transporter (VRG4) of Coccidioides immitis (strain RS) (Valley fever fungus).